The chain runs to 184 residues: Ribosome-recycling factor (184 aa).

This sequence belongs to the RRF family.

It is found in the cytoplasm. Responsible for the release of ribosomes from messenger RNA at the termination of protein biosynthesis. May increase the efficiency of translation by recycling ribosomes from one round of translation to another. This is Ribosome-recycling factor from Aquifex aeolicus (strain VF5).